The sequence spans 175 residues: Peptide deformylase (175 aa).

Fe cation-binding residues include Cys-98 and His-140. Glu-141 is a catalytic residue. His-144 provides a ligand contact to Fe cation.

Belongs to the polypeptide deformylase family. Fe(2+) is required as a cofactor.

It catalyses the reaction N-terminal N-formyl-L-methionyl-[peptide] + H2O = N-terminal L-methionyl-[peptide] + formate. Functionally, removes the formyl group from the N-terminal Met of newly synthesized proteins. Requires at least a dipeptide for an efficient rate of reaction. N-terminal L-methionine is a prerequisite for activity but the enzyme has broad specificity at other positions. The sequence is that of Peptide deformylase from Bradyrhizobium sp. (strain ORS 278).